The primary structure comprises 401 residues: Argininosuccinate synthase (401 aa).

Residues 11–19 and A38 each bind ATP; that span reads AYSGGLDTS. Residues Y89 and S94 each coordinate L-citrulline. ATP is bound at residue G119. The L-aspartate site is built by T121, N125, and D126. N125 is an L-citrulline binding site. Residues R129, S177, S186, E262, and Y274 each coordinate L-citrulline.

Belongs to the argininosuccinate synthase family. Type 1 subfamily. As to quaternary structure, homotetramer.

It is found in the cytoplasm. It catalyses the reaction L-citrulline + L-aspartate + ATP = 2-(N(omega)-L-arginino)succinate + AMP + diphosphate + H(+). Its pathway is amino-acid biosynthesis; L-arginine biosynthesis; L-arginine from L-ornithine and carbamoyl phosphate: step 2/3. This Nitratidesulfovibrio vulgaris (strain DSM 19637 / Miyazaki F) (Desulfovibrio vulgaris) protein is Argininosuccinate synthase.